Here is a 397-residue protein sequence, read N- to C-terminus: Acetate kinase (397 aa).

Asn-7 contacts Mg(2+). Residue Lys-14 participates in ATP binding. Residue Arg-90 coordinates substrate. The Proton donor/acceptor role is filled by Asp-147. Residues 207 to 211, 282 to 284, and 330 to 334 contribute to the ATP site; these read HLGNG, DFR, and GLGEN. Glu-383 contacts Mg(2+).

It belongs to the acetokinase family. Homodimer. Mg(2+) serves as cofactor. Requires Mn(2+) as cofactor.

Its subcellular location is the cytoplasm. It carries out the reaction acetate + ATP = acetyl phosphate + ADP. It participates in metabolic intermediate biosynthesis; acetyl-CoA biosynthesis; acetyl-CoA from acetate: step 1/2. In terms of biological role, catalyzes the formation of acetyl phosphate from acetate and ATP. Can also catalyze the reverse reaction. The polypeptide is Acetate kinase (Clostridium botulinum (strain ATCC 19397 / Type A)).